The chain runs to 178 residues: Large ribosomal subunit protein uL6 (178 aa).

Belongs to the universal ribosomal protein uL6 family. Part of the 50S ribosomal subunit.

This protein binds to the 23S rRNA, and is important in its secondary structure. It is located near the subunit interface in the base of the L7/L12 stalk, and near the tRNA binding site of the peptidyltransferase center. This chain is Large ribosomal subunit protein uL6, found in Oenococcus oeni (strain ATCC BAA-331 / PSU-1).